We begin with the raw amino-acid sequence, 353 residues long: Photosystem II protein D1 (353 aa).

The residue at position 2 (Thr-2) is an N-acetylthreonine. Residue Thr-2 is modified to Phosphothreonine. 3 helical membrane-spanning segments follow: residues 29 to 46, 118 to 133, and 142 to 156; these read YIGWFGVIMIPCLLTAIS, HFLLGIACYMGREWEL, and WIAVAYSAPVAAATA. His-118 contributes to the chlorophyll a binding site. Tyr-126 lines the pheophytin a pocket. [CaMn4O5] cluster is bound by residues Asp-170 and Glu-189. The chain crosses the membrane as a helical span at residues 197-218; that stretch reads FHMLGVAGVFGGSLFSAMHGSL. His-198 serves as a coordination point for chlorophyll a. A quinone-binding positions include His-215 and 264-265; that span reads SF. His-215 provides a ligand contact to Fe cation. Residue His-272 participates in Fe cation binding. The helical transmembrane segment at 274-288 threads the bilayer; it reads FLAVWPVVGIWFTAM. Residues His-332, Glu-333, Asp-342, and Ala-344 each contribute to the [CaMn4O5] cluster site. The propeptide occupies 345–353; that stretch reads SVEAPAVNG.

It belongs to the reaction center PufL/M/PsbA/D family. In terms of assembly, PSII is composed of 1 copy each of membrane proteins PsbA, PsbB, PsbC, PsbD, PsbE, PsbF, PsbH, PsbI, PsbJ, PsbK, PsbL, PsbM, PsbT, PsbX, PsbY, PsbZ, Psb30/Ycf12, at least 3 peripheral proteins of the oxygen-evolving complex and a large number of cofactors. It forms dimeric complexes. It depends on The D1/D2 heterodimer binds P680, chlorophylls that are the primary electron donor of PSII, and subsequent electron acceptors. It shares a non-heme iron and each subunit binds pheophytin, quinone, additional chlorophylls, carotenoids and lipids. D1 provides most of the ligands for the Mn4-Ca-O5 cluster of the oxygen-evolving complex (OEC). There is also a Cl(-1) ion associated with D1 and D2, which is required for oxygen evolution. The PSII complex binds additional chlorophylls, carotenoids and specific lipids. as a cofactor. Post-translationally, tyr-161 forms a radical intermediate that is referred to as redox-active TyrZ, YZ or Y-Z. C-terminally processed by CTPA; processing is essential to allow assembly of the oxygen-evolving complex and thus photosynthetic growth.

The protein resides in the plastid. It localises to the chloroplast thylakoid membrane. The enzyme catalyses 2 a plastoquinone + 4 hnu + 2 H2O = 2 a plastoquinol + O2. Photosystem II (PSII) is a light-driven water:plastoquinone oxidoreductase that uses light energy to abstract electrons from H(2)O, generating O(2) and a proton gradient subsequently used for ATP formation. It consists of a core antenna complex that captures photons, and an electron transfer chain that converts photonic excitation into a charge separation. The D1/D2 (PsbA/PsbD) reaction center heterodimer binds P680, the primary electron donor of PSII as well as several subsequent electron acceptors. The sequence is that of Photosystem II protein D1 from Mesostigma viride (Green alga).